A 662-amino-acid polypeptide reads, in one-letter code: Tubulin--tyrosine ligase-like protein 12 (662 aa).

Residues 324 to 660 (LKKRKIKVYA…LDEIDPTKVT (337 aa)) enclose the TTL domain. ATP is bound by residues 472-475 (CEYI), Lys-491, and Asp-493.

It belongs to the tubulin--tyrosine ligase family.

Its function is as follows. Regulates microtubule dynamics in uterine muscle cells. The chain is Tubulin--tyrosine ligase-like protein 12 from Caenorhabditis elegans.